Reading from the N-terminus, the 227-residue chain is Acyl-protein thioesterase 1 (227 aa).

Residues Ser119, Asp173, and His207 each act as charge relay system in the active site.

The protein belongs to the AB hydrolase superfamily. AB hydrolase 2 family.

The protein resides in the cytoplasm. It is found in the nucleus. The enzyme catalyses S-hexadecanoyl-L-cysteinyl-[protein] + H2O = L-cysteinyl-[protein] + hexadecanoate + H(+). Hydrolyzes fatty acids from S-acylated cysteine residues in proteins with a strong preference for palmitoylated G-alpha proteins over other acyl substrates. Mediates the deacylation of G-alpha proteins such as GPA1 in vivo, but has weak or no activity toward palmitoylated Ras proteins. Has weak lysophospholipase activity in vitro; however such activity may not exist in vivo. This is Acyl-protein thioesterase 1 from Saccharomyces cerevisiae (strain ATCC 204508 / S288c) (Baker's yeast).